Consider the following 280-residue polypeptide: Large ribosomal subunit protein uL2 (280 aa).

The disordered stretch occupies residues Gly215–Lys280.

Belongs to the universal ribosomal protein uL2 family. Part of the 50S ribosomal subunit. Forms a bridge to the 30S subunit in the 70S ribosome.

One of the primary rRNA binding proteins. Required for association of the 30S and 50S subunits to form the 70S ribosome, for tRNA binding and peptide bond formation. It has been suggested to have peptidyltransferase activity; this is somewhat controversial. Makes several contacts with the 16S rRNA in the 70S ribosome. This Dictyoglomus thermophilum (strain ATCC 35947 / DSM 3960 / H-6-12) protein is Large ribosomal subunit protein uL2.